A 60-amino-acid polypeptide reads, in one-letter code: Large ribosomal subunit protein bL32 (60 aa).

This sequence belongs to the bacterial ribosomal protein bL32 family.

In Petrotoga mobilis (strain DSM 10674 / SJ95), this protein is Large ribosomal subunit protein bL32.